Reading from the N-terminus, the 666-residue chain is UvrABC system protein B (666 aa).

In terms of domain architecture, Helicase ATP-binding spans 28–171 (NNINQGIQRQ…YLHVGELIEF (144 aa)). Residue 41–48 (GATGTGKT) participates in ATP binding. The Beta-hairpin signature appears at 94–117 (YFDYYQPEAYKPITDTYIEKDSVT). The Helicase C-terminal domain occupies 436–598 (QIDDLINELM…IIPKTIIKPI (163 aa)). A UVR domain is found at 624 to 659 (NQKIKELKKKMEEAAKKREYEVAAQYRDMIVELEAI).

The protein belongs to the UvrB family. As to quaternary structure, forms a heterotetramer with UvrA during the search for lesions. Interacts with UvrC in an incision complex.

It localises to the cytoplasm. Its function is as follows. The UvrABC repair system catalyzes the recognition and processing of DNA lesions. A damage recognition complex composed of 2 UvrA and 2 UvrB subunits scans DNA for abnormalities. Upon binding of the UvrA(2)B(2) complex to a putative damaged site, the DNA wraps around one UvrB monomer. DNA wrap is dependent on ATP binding by UvrB and probably causes local melting of the DNA helix, facilitating insertion of UvrB beta-hairpin between the DNA strands. Then UvrB probes one DNA strand for the presence of a lesion. If a lesion is found the UvrA subunits dissociate and the UvrB-DNA preincision complex is formed. This complex is subsequently bound by UvrC and the second UvrB is released. If no lesion is found, the DNA wraps around the other UvrB subunit that will check the other stand for damage. This chain is UvrABC system protein B, found in Ureaplasma parvum serovar 3 (strain ATCC 27815 / 27 / NCTC 11736).